A 213-amino-acid chain; its full sequence is Thymidylate kinase (213 aa).

10-17 (GLEGAGKT) contributes to the ATP binding site.

It belongs to the thymidylate kinase family.

It catalyses the reaction dTMP + ATP = dTDP + ADP. Its function is as follows. Phosphorylation of dTMP to form dTDP in both de novo and salvage pathways of dTTP synthesis. The sequence is that of Thymidylate kinase from Escherichia coli O6:H1 (strain CFT073 / ATCC 700928 / UPEC).